The sequence spans 384 residues: Deoxyguanosinetriphosphate triphosphohydrolase-like protein (384 aa).

The region spanning 63-199 is the HD domain; that stretch reads RLTHSLEVAT…ASLADDISYI (137 aa).

Belongs to the dGTPase family. Type 2 subfamily.

The chain is Deoxyguanosinetriphosphate triphosphohydrolase-like protein from Rickettsia typhi (strain ATCC VR-144 / Wilmington).